We begin with the raw amino-acid sequence, 251 residues long: D-aminoacyl-tRNA deacylase (251 aa).

This sequence belongs to the DtdA deacylase family. As to quaternary structure, monomer. Zn(2+) serves as cofactor.

It carries out the reaction a D-aminoacyl-tRNA + H2O = a tRNA + a D-alpha-amino acid + H(+). It catalyses the reaction glycyl-tRNA(Ala) + H2O = tRNA(Ala) + glycine + H(+). Its function is as follows. D-aminoacyl-tRNA deacylase with broad substrate specificity. By recycling D-aminoacyl-tRNA to D-amino acids and free tRNA molecules, this enzyme counteracts the toxicity associated with the formation of D-aminoacyl-tRNA entities in vivo. This Pyrobaculum calidifontis (strain DSM 21063 / JCM 11548 / VA1) protein is D-aminoacyl-tRNA deacylase.